Consider the following 248-residue polypeptide: Uridylate kinase (248 aa).

Residue 13–16 participates in ATP binding; that stretch reads KLSG. A UMP-binding site is contributed by G55. Positions 56 and 60 each coordinate ATP. UMP-binding positions include D75 and 136 to 143; that span reads TGNPYFTT. Positions 163, 169, and 172 each coordinate ATP.

The protein belongs to the UMP kinase family. Homohexamer.

Its subcellular location is the cytoplasm. It carries out the reaction UMP + ATP = UDP + ADP. It participates in pyrimidine metabolism; CTP biosynthesis via de novo pathway; UDP from UMP (UMPK route): step 1/1. Inhibited by UTP. Catalyzes the reversible phosphorylation of UMP to UDP. This Leptospira interrogans serogroup Icterohaemorrhagiae serovar copenhageni (strain Fiocruz L1-130) protein is Uridylate kinase.